Reading from the N-terminus, the 259-residue chain is Phosphate import ATP-binding protein PstB (259 aa).

Positions 10–254 constitute an ABC transporter domain; sequence AESRNLSFYY…PSRKETEDYI (245 aa). ATP is bound at residue 43–50; it reads GPSGCGKS.

The protein belongs to the ABC transporter superfamily. Phosphate importer (TC 3.A.1.7) family. In terms of assembly, the complex is composed of two ATP-binding proteins (PstB), two transmembrane proteins (PstC and PstA) and a solute-binding protein (PstS).

It localises to the cell inner membrane. It carries out the reaction phosphate(out) + ATP + H2O = ADP + 2 phosphate(in) + H(+). In terms of biological role, part of the ABC transporter complex PstSACB involved in phosphate import. Responsible for energy coupling to the transport system. The polypeptide is Phosphate import ATP-binding protein PstB (Methylobacillus flagellatus (strain ATCC 51484 / DSM 6875 / VKM B-1610 / KT)).